A 424-amino-acid chain; its full sequence is Oleosin-B3 (424 aa).

The tract at residues Met-1–Lys-37 is polar. Transmembrane regions (helical) follow at residues Gln-16 to Ile-36, Met-38 to Gly-58, and Leu-69 to Ala-89. Residues Met-38 to Asn-119 are hydrophobic. 18 repeat units span residues Ile-111–Val-120, Ile-121–Ile-130, Ile-131–Ile-140, Ile-141–Ile-150, Glu-196–Gly-202, Glu-203–Gly-209, Glu-210–Gly-216, Glu-217–Gly-223, Lys-241–Gly-258, Lys-259–Gly-276, Lys-277–Gly-294, Lys-301–Gly-318, Lys-319–Gly-336, Arg-337–Gly-354, Ser-396–Ser-400, Ser-401–Ser-405, Ser-406–Ser-410, and Ser-411–Ser-415. Residues Ile-111–Ile-150 are 4 X 10 AA tandem repeats of I-P-[EV]-S-I-K-P-S-N-[IV]. A disordered region spans residues Lys-164–Ile-424. Positions Ala-167–His-220 are enriched in basic and acidic residues. Residues Glu-196–Gly-223 are 4 X 7 AA tandem repeats of E-[SD]-[KT]-H-G-K-G. Residues Lys-241–Gly-354 are 6 X 18 AA tandem repeats of [KR]-H-[EG]-[SG]-G-G-[SA]-[PSA]-M-G-G-G-K-H-[GE]-S-[GV]-G. A compositionally biased stretch (gly residues) spans His-242 to Gly-255. The span at Gly-288–Ser-304 shows a compositional bias: basic and acidic residues. Gly residues predominate over residues Gly-341–Lys-355. Residues Ser-391 to Ser-416 are compositionally biased toward low complexity. The tract at residues Ser-396–Ser-415 is 4 X 5 AA tandem repeats of S-S-D-G-S.

The protein belongs to the oleosin family. In terms of tissue distribution, the full-length protein is found in the tapetal lipid bodies of immature anthers, the proteolytically cleaved C-terminal product is found on the coats of pollen grains. No expression is detected in other flower organs, siliques or seedlings.

It is found in the lipid droplet. It localises to the membrane. Many of the major pollen coat proteins are derived from endoproteolytic cleavage of oleosin-like proteins. The polypeptide is Oleosin-B3 (Brassica napus (Rape)).